Reading from the N-terminus, the 411-residue chain is Imidazolonepropionase (411 aa).

2 residues coordinate Fe(3+): His75 and His77. Residues His75 and His77 each coordinate Zn(2+). The 4-imidazolone-5-propanoate site is built by Arg84, Tyr147, and His180. Tyr147 serves as a coordination point for N-formimidoyl-L-glutamate. A Fe(3+)-binding site is contributed by His245. A Zn(2+)-binding site is contributed by His245. Gln248 serves as a coordination point for 4-imidazolone-5-propanoate. Residue Asp320 coordinates Fe(3+). A Zn(2+)-binding site is contributed by Asp320. N-formimidoyl-L-glutamate contacts are provided by Asn322 and Gly324. Thr325 is a 4-imidazolone-5-propanoate binding site.

The protein belongs to the metallo-dependent hydrolases superfamily. HutI family. Requires Zn(2+) as cofactor. Fe(3+) is required as a cofactor.

Its subcellular location is the cytoplasm. The catalysed reaction is 4-imidazolone-5-propanoate + H2O = N-formimidoyl-L-glutamate. It functions in the pathway amino-acid degradation; L-histidine degradation into L-glutamate; N-formimidoyl-L-glutamate from L-histidine: step 3/3. In terms of biological role, catalyzes the hydrolytic cleavage of the carbon-nitrogen bond in imidazolone-5-propanoate to yield N-formimidoyl-L-glutamate. It is the third step in the universal histidine degradation pathway. The sequence is that of Imidazolonepropionase from Aeromonas hydrophila subsp. hydrophila (strain ATCC 7966 / DSM 30187 / BCRC 13018 / CCUG 14551 / JCM 1027 / KCTC 2358 / NCIMB 9240 / NCTC 8049).